Consider the following 218-residue polypeptide: Adenylate kinase (218 aa).

11–16 (GAGKGT) provides a ligand contact to ATP. The NMP stretch occupies residues 31-60 (STGDMFREAMANKTKVGLEAKSYIDKGNLV). Residues Thr32, Arg37, 58-60 (NLV), 86-89 (GFPR), and Gln93 contribute to the AMP site. Positions 127–165 (ARYMCKNCGATYNKISKQPKVEGTCDRCGSHEFYQREDD) are LID. Position 128 (Arg128) interacts with ATP. Residues Cys131 and Cys134 each coordinate Zn(2+). 137-138 (TY) is an ATP binding site. Residues Cys151 and Cys154 each coordinate Zn(2+). Residues Arg162 and Arg173 each contribute to the AMP site. An ATP-binding site is contributed by Gln201.

This sequence belongs to the adenylate kinase family. In terms of assembly, monomer.

It localises to the cytoplasm. The enzyme catalyses AMP + ATP = 2 ADP. The protein operates within purine metabolism; AMP biosynthesis via salvage pathway; AMP from ADP: step 1/1. Its function is as follows. Catalyzes the reversible transfer of the terminal phosphate group between ATP and AMP. Plays an important role in cellular energy homeostasis and in adenine nucleotide metabolism. This chain is Adenylate kinase, found in Lactobacillus acidophilus (strain ATCC 700396 / NCK56 / N2 / NCFM).